A 294-amino-acid chain; its full sequence is Nucleoside-specific channel-forming protein Tsx (294 aa).

Positions 1 to 22 (MKKTLLAASAVVALSASFTAGA) are cleaved as a signal peptide.

It belongs to the nucleoside-specific channel-forming outer membrane porin (Tsx) (TC 1.B.10) family.

The protein resides in the cell outer membrane. Its function is as follows. Functions as a substrate-specific channel for nucleosides and deoxynucleosides. Also functions in albicidin uptake and as receptor for colicin K. Also is a receptor for several Tsx-specific bacteriophages. The protein is Nucleoside-specific channel-forming protein Tsx of Klebsiella aerogenes (strain ATCC 13048 / DSM 30053 / CCUG 1429 / JCM 1235 / KCTC 2190 / NBRC 13534 / NCIMB 10102 / NCTC 10006 / CDC 819-56) (Enterobacter aerogenes).